The primary structure comprises 356 residues: 4-hydroxy-3-methylbut-2-en-1-yl diphosphate synthase (flavodoxin) (356 aa).

Cysteine 264, cysteine 267, cysteine 299, and glutamate 306 together coordinate [4Fe-4S] cluster.

The protein belongs to the IspG family. The cofactor is [4Fe-4S] cluster.

The enzyme catalyses (2E)-4-hydroxy-3-methylbut-2-enyl diphosphate + oxidized [flavodoxin] + H2O + 2 H(+) = 2-C-methyl-D-erythritol 2,4-cyclic diphosphate + reduced [flavodoxin]. Its pathway is isoprenoid biosynthesis; isopentenyl diphosphate biosynthesis via DXP pathway; isopentenyl diphosphate from 1-deoxy-D-xylulose 5-phosphate: step 5/6. In terms of biological role, converts 2C-methyl-D-erythritol 2,4-cyclodiphosphate (ME-2,4cPP) into 1-hydroxy-2-methyl-2-(E)-butenyl 4-diphosphate. This is 4-hydroxy-3-methylbut-2-en-1-yl diphosphate synthase (flavodoxin) from Natranaerobius thermophilus (strain ATCC BAA-1301 / DSM 18059 / JW/NM-WN-LF).